The sequence spans 263 residues: MTRIDDTFRRLRAEGKKAFVAYIMAGDPDLETSLAVMRGLPEAGVDIIELGMPFTDPMADGPTIQTAGQRALEGGQTLTRTLEMVRAFRAENAETPIVMMGYYNPIYARGVETFLAEATEAGIDGLIVVDLPPEEDAELCLPAQAAGLNFIRLATPTTDSRRLPKVLQNTSGFVYYVSITGITGAAAAQAADVAPEVARIKAATDLPVIVGFGITTPEAAQDLAGIADGCVVGSAIVKLVGEGRPVAEVLDRVAALAAGAHAA.

Catalysis depends on proton acceptor residues glutamate 49 and aspartate 60.

It belongs to the TrpA family. In terms of assembly, tetramer of two alpha and two beta chains.

The enzyme catalyses (1S,2R)-1-C-(indol-3-yl)glycerol 3-phosphate + L-serine = D-glyceraldehyde 3-phosphate + L-tryptophan + H2O. Its pathway is amino-acid biosynthesis; L-tryptophan biosynthesis; L-tryptophan from chorismate: step 5/5. The alpha subunit is responsible for the aldol cleavage of indoleglycerol phosphate to indole and glyceraldehyde 3-phosphate. This chain is Tryptophan synthase alpha chain, found in Cereibacter sphaeroides (strain ATCC 17029 / ATH 2.4.9) (Rhodobacter sphaeroides).